The following is a 242-amino-acid chain: Biosynthetic peptidoglycan transglycosylase (242 aa).

A helical membrane pass occupies residues 19-39; the sequence is ILAALAVFWGGGIALFSVVPV.

The protein belongs to the glycosyltransferase 51 family.

It is found in the cell inner membrane. It carries out the reaction [GlcNAc-(1-&gt;4)-Mur2Ac(oyl-L-Ala-gamma-D-Glu-L-Lys-D-Ala-D-Ala)](n)-di-trans,octa-cis-undecaprenyl diphosphate + beta-D-GlcNAc-(1-&gt;4)-Mur2Ac(oyl-L-Ala-gamma-D-Glu-L-Lys-D-Ala-D-Ala)-di-trans,octa-cis-undecaprenyl diphosphate = [GlcNAc-(1-&gt;4)-Mur2Ac(oyl-L-Ala-gamma-D-Glu-L-Lys-D-Ala-D-Ala)](n+1)-di-trans,octa-cis-undecaprenyl diphosphate + di-trans,octa-cis-undecaprenyl diphosphate + H(+). Its pathway is cell wall biogenesis; peptidoglycan biosynthesis. Functionally, peptidoglycan polymerase that catalyzes glycan chain elongation from lipid-linked precursors. This is Biosynthetic peptidoglycan transglycosylase from Salmonella heidelberg (strain SL476).